The sequence spans 173 residues: Peptide methionine sulfoxide reductase MsrA (173 aa).

Cys-10 is a catalytic residue.

Belongs to the MsrA Met sulfoxide reductase family.

It carries out the reaction L-methionyl-[protein] + [thioredoxin]-disulfide + H2O = L-methionyl-(S)-S-oxide-[protein] + [thioredoxin]-dithiol. The enzyme catalyses [thioredoxin]-disulfide + L-methionine + H2O = L-methionine (S)-S-oxide + [thioredoxin]-dithiol. In terms of biological role, has an important function as a repair enzyme for proteins that have been inactivated by oxidation. Catalyzes the reversible oxidation-reduction of methionine sulfoxide in proteins to methionine. In Acinetobacter baumannii (strain AB307-0294), this protein is Peptide methionine sulfoxide reductase MsrA.